Consider the following 285-residue polypeptide: Putative phosphatase MG125 (285 aa).

Asp-8 (nucleophile) is an active-site residue. Asp-8 contacts Mg(2+). Leu-9 serves as a coordination point for phosphate. Asp-10 lines the Mg(2+) pocket. Phosphate-binding positions include 44 to 45 (TG) and Lys-205. Mg(2+) contacts are provided by Asp-228 and Ser-229. Asn-231 contributes to the phosphate binding site.

This sequence belongs to the HAD-like hydrolase superfamily. Cof family. It depends on Mg(2+) as a cofactor.

The chain is Putative phosphatase MG125 from Mycoplasma genitalium (strain ATCC 33530 / DSM 19775 / NCTC 10195 / G37) (Mycoplasmoides genitalium).